Here is a 216-residue protein sequence, read N- to C-terminus: NADH-quinone oxidoreductase subunit C (216 aa).

Belongs to the complex I 30 kDa subunit family. As to quaternary structure, NDH-1 is composed of 14 different subunits. Subunits NuoB, C, D, E, F, and G constitute the peripheral sector of the complex.

The protein localises to the cell inner membrane. The catalysed reaction is a quinone + NADH + 5 H(+)(in) = a quinol + NAD(+) + 4 H(+)(out). In terms of biological role, NDH-1 shuttles electrons from NADH, via FMN and iron-sulfur (Fe-S) centers, to quinones in the respiratory chain. The immediate electron acceptor for the enzyme in this species is believed to be ubiquinone. Couples the redox reaction to proton translocation (for every two electrons transferred, four hydrogen ions are translocated across the cytoplasmic membrane), and thus conserves the redox energy in a proton gradient. This is NADH-quinone oxidoreductase subunit C from Francisella tularensis subsp. holarctica (strain OSU18).